A 345-amino-acid chain; its full sequence is Eukaryotic translation initiation factor 3 subunit F (345 aa).

Residues 30-166 enclose the MPN domain; that stretch reads VVIQPQALFS…TRAYISAPVG (137 aa). A disordered region spans residues 308 to 345; it reads GGESGSTESGQRGGQRGGKGGRGGQQRNQERSGEEVRA. Gly residues predominate over residues 318 to 331; sequence QRGGQRGGKGGRGG. A compositionally biased stretch (basic and acidic residues) spans 335 to 345; that stretch reads NQERSGEEVRA.

Belongs to the eIF-3 subunit F family. In terms of assembly, component of the eukaryotic translation initiation factor 3 (eIF-3) complex.

The protein localises to the cytoplasm. In terms of biological role, component of the eukaryotic translation initiation factor 3 (eIF-3) complex, which is involved in protein synthesis of a specialized repertoire of mRNAs and, together with other initiation factors, stimulates binding of mRNA and methionyl-tRNAi to the 40S ribosome. The eIF-3 complex specifically targets and initiates translation of a subset of mRNAs involved in cell proliferation. This is Eukaryotic translation initiation factor 3 subunit F from Aspergillus terreus (strain NIH 2624 / FGSC A1156).